The chain runs to 450 residues: ATP-dependent protease ATPase subunit HslU (450 aa).

ATP-binding positions include Val-29, 71 to 76, Asp-261, Glu-328, and Arg-400; that span reads GVGKTE.

The protein belongs to the ClpX chaperone family. HslU subfamily. A double ring-shaped homohexamer of HslV is capped on each side by a ring-shaped HslU homohexamer. The assembly of the HslU/HslV complex is dependent on binding of ATP.

The protein localises to the cytoplasm. Functionally, ATPase subunit of a proteasome-like degradation complex; this subunit has chaperone activity. The binding of ATP and its subsequent hydrolysis by HslU are essential for unfolding of protein substrates subsequently hydrolyzed by HslV. HslU recognizes the N-terminal part of its protein substrates and unfolds these before they are guided to HslV for hydrolysis. The protein is ATP-dependent protease ATPase subunit HslU of Rickettsia peacockii (strain Rustic).